A 690-amino-acid polypeptide reads, in one-letter code: Cyclic nucleotide-gated channel alpha-1 (690 aa).

The Cytoplasmic segment spans residues 1 to 163; that stretch reads MKKVIINTWH…VVIDPSGNTY (163 aa). 2 disordered regions span residues 33–76 and 88–151; these read GACS…PSQR and NVNN…EEKK. The segment covering 40-54 has biased composition (acidic residues); the sequence is GDDDDSASMFEESET. Positions 64–76 are enriched in polar residues; sequence RSNTHGSGQPSQR. Residues 111-151 are compositionally biased toward basic and acidic residues; sequence SKPDDKNENKKDPEKKKKKEKDKDKKKKEEKGKDKKEEEKK. Residues 164–185 form a helical membrane-spanning segment; sequence YNWLFCITLPVMYNWTMIIARA. The Extracellular segment spans residues 186–195; that stretch reads CFDELQSDYL. The helical transmembrane segment at 196-215 threads the bilayer; the sequence is EYWLAFDYLSDVVYLLDMFV. Residues 216 to 241 lie on the Cytoplasmic side of the membrane; it reads RTRTGYLEQGLLVKEERKLIDKYKST. A helical membrane pass occupies residues 242-251; sequence FQFKLDVLSV. Residues 252 to 264 are Extracellular-facing; the sequence is IPTDLLYIKFGWN. Residues 265–283 form a helical membrane-spanning segment; sequence YPEIRLNRLLRISRMFEFF. Over 284 to 291 the chain is Cytoplasmic; sequence QRTETRTN. Residues 292–315 traverse the membrane as a helical segment; that stretch reads YPNIFRISNLVMYIIIIIHWNACV. The tract at residues 293-402 is ion conduction pathway; that stretch reads PNIFRISNLV…NIGSMISNMN (110 aa). Topologically, residues 316-342 are extracellular; that stretch reads YFSISKAIGFGNDTWVYPDVNDPDFGR. N-linked (GlcNAc...) asparagine glycosylation occurs at asparagine 327. 2 helical membrane-spanning segments follow: residues 343–373 and 374–399; these read LARKYVYSLYWSTLTLTTIGETPPPVRDSEY and FFVVADFLIGVLIFATIVGNIGSMIS. The segment at 360–363 is selectivity filter; it reads TIGE. The Cytoplasmic segment spans residues 400–690; the sequence is NMNAARAEFQ…ESGPTDSTQD (291 aa). Residues 403–479 are C-linker; sequence AARAEFQARI…DTLKKVRIFA (77 aa). Residues 482–603 are cyclic nucleotide-binding domain (CNBD); that stretch reads EAGLLVELVL…EEKGKQILMK (122 aa). 3',5'-cyclic GMP contacts are provided by glycine 543, serine 546, arginine 559, and threonine 560. Arginine 559 and threonine 560 together coordinate 3',5'-cyclic AMP. The stretch at 621-664 forms a coiled coil; sequence LEEKVTRMESSVDLLQTRFARILAEYESMQQKLKQRLTKVEKFL.

It belongs to the cyclic nucleotide-gated cation channel (TC 1.A.1.5) family. CNGA1 subfamily. In terms of assembly, forms a heterotetramer with CNGB1 in a 3:1 ratio. May also form cyclic nucleotide-activated homotetrameric channels, that are efficiently activated by saturating cGMP, but poorly activated by saturating cAMP compared to the heterotetramer with CNGB1. The channel binds Ca(2+)-bound CALM1 via CaM1 and CaM2 regions of the CNGB1 subunit; this interaction modulates the affinity of the channel for cNMPs in response to intracellular Ca(2+) levels. In terms of tissue distribution, expressed in the retina, in rod cells (at protein level).

The protein localises to the cell membrane. The catalysed reaction is Ca(2+)(in) = Ca(2+)(out). The enzyme catalyses Na(+)(in) = Na(+)(out). It carries out the reaction K(+)(in) = K(+)(out). It catalyses the reaction NH4(+)(in) = NH4(+)(out). The catalysed reaction is Rb(+)(in) = Rb(+)(out). The enzyme catalyses Li(+)(in) = Li(+)(out). It carries out the reaction Cs(+)(in) = Cs(+)(out). Functionally, pore-forming subunit of the rod cyclic nucleotide-gated channel. Mediates rod photoresponses at dim light converting transient changes in intracellular cGMP levels into electrical signals. In the dark, cGMP levels are high and keep the channel open enabling a steady inward current carried by Na(+) and Ca(2+) ions that leads to membrane depolarization and neurotransmitter release from synaptic terminals. Upon photon absorption cGMP levels decline leading to channel closure and membrane hyperpolarization that ultimately slows neurotransmitter release and signals the presence of light, the end point of the phototransduction cascade. Conducts cGMP- and cAMP-gated ion currents, with permeability for monovalent and divalent cations. The selectivity for Ca(2+) over Na(+) increases with cGMP concentrations, whereas the selectivity among monovalent ions is independent of the cGMP levels. In Bos taurus (Bovine), this protein is Cyclic nucleotide-gated channel alpha-1.